Here is a 484-residue protein sequence, read N- to C-terminus: Suppressor of fused homolog (484 aa).

Residues 1–21 (MAELRPSVAPGPAAPPASGPS) form a disordered region. The segment covering 12–21 (PAAPPASGPS) has biased composition (pro residues). Lys-257 participates in a covalent cross-link: Glycyl lysine isopeptide (Lys-Gly) (interchain with G-Cter in ubiquitin). Residues 279 to 360 (SRPPEDEEDS…SSTAIIPHEL (82 aa)) form a disordered region. Ser-301 is modified (phosphoserine). At Lys-303 the chain carries N6-acetyllysine. Lys-321 is covalently cross-linked (Glycyl lysine isopeptide (Lys-Gly) (interchain with G-Cter in SUMO2)). A compositionally biased stretch (basic and acidic residues) spans 336–347 (THDRAPSRKDSL). A phosphoserine mark is found at Ser-342, Ser-346, and Ser-352. A Phosphothreonine modification is found at Thr-353. Residue Ser-481 is modified to Phosphoserine.

The protein belongs to the SUFU family. May form homodimers. Interacts with ULK3; inactivating the protein kinase activity of ULK3. Interacts with RAB23. Part of a DNA-bound corepressor complex containing SAP18, GLI1 and SIN3. Part of a complex containing CTNNB1. Binds BTRC, GLI2, GLI3, SAP18 and STK36. Binds both free and DNA-bound GLI1. Interacts with KIF7. Interacts with GLI3FL and this interaction regulates the formation of either repressor or activator forms of GLI3. Its association with GLI3FL is regulated by Hh signaling and dissociation of the SUFU-GLI3 interaction requires the presence of the ciliary motor KIF3A. In terms of processing, polyubiquitinated at Lys-257 by the SCF(FBXL17) complex, leading to its subsequent degradation and allowing the release of GLI1 for proper hedgehog/smoothened signal transduction. Ubiquitination is impaired by phosphorylation at Ser-342, Ser-346, Ser-352 and Thr-353. Post-translationally, phosphorylation at Ser-342, Ser-346, Ser-352 and Thr-353 prevents ubiquitination by the SCF(FBXL17) complex. Widely expressed in adult and fetal tissues.

Its subcellular location is the cytoplasm. It is found in the nucleus. Functionally, negative regulator in the hedgehog/smoothened signaling pathway. Down-regulates GLI1-mediated transactivation of target genes. Part of a corepressor complex that acts on DNA-bound GLI1. May also act by linking GLI1 to BTRC and thereby targeting GLI1 to degradation by the proteasome. Sequesters GLI1, GLI2 and GLI3 in the cytoplasm, this effect is overcome by binding of STK36 to both SUFU and a GLI protein. Negative regulator of beta-catenin signaling. Regulates the formation of either the repressor form (GLI3R) or the activator form (GLI3A) of the full-length form of GLI3 (GLI3FL). GLI3FL is complexed with SUFU in the cytoplasm and is maintained in a neutral state. Without the Hh signal, the SUFU-GLI3 complex is recruited to cilia, leading to the efficient processing of GLI3FL into GLI3R. When Hh signaling is initiated, SUFU dissociates from GLI3FL and the latter translocates to the nucleus, where it is phosphorylated, destabilized, and converted to a transcriptional activator (GLI3A). Required for normal embryonic development. Required for the proper formation of hair follicles and the control of epidermal differentiation. This chain is Suppressor of fused homolog, found in Mus musculus (Mouse).